The primary structure comprises 334 residues: D-fructose 1,6-bisphosphatase class 2/sedoheptulose 1,7-bisphosphatase (334 aa).

Mn(2+) contacts are provided by Asp33, Glu57, Asp85, and Glu88. Substrate-binding positions include 88–90, Tyr119, 164–166, and 186–188; these read EGT, RAR, and DGD. Glu213 serves as a coordination point for Mn(2+).

Belongs to the FBPase class 2 family. In terms of assembly, homotetramer. Mn(2+) is required as a cofactor.

The enzyme catalyses beta-D-fructose 1,6-bisphosphate + H2O = beta-D-fructose 6-phosphate + phosphate. The catalysed reaction is D-sedoheptulose 1,7-bisphosphate + H2O = D-sedoheptulose 7-phosphate + phosphate. The protein operates within carbohydrate biosynthesis; Calvin cycle. Functionally, catalyzes the hydrolysis of fructose 1,6-bisphosphate (Fru 1,6-P2) and sedoheptulose 1,7-bisphosphate (Sed 1,7-P2) to fructose 6-phosphate and sedoheptulose 7-phosphate, respectively. This is D-fructose 1,6-bisphosphatase class 2/sedoheptulose 1,7-bisphosphatase from Prochlorococcus marinus (strain MIT 9303).